Consider the following 82-residue polypeptide: Small ribosomal subunit protein bS16 (82 aa).

The protein belongs to the bacterial ribosomal protein bS16 family.

This chain is Small ribosomal subunit protein bS16, found in Serratia proteamaculans (strain 568).